Consider the following 1863-residue polypeptide: MDLSAVRVEEVQNVINAMQKILECPICLELIKEPVSTKCDHIFCRFCMLKLLNQKKGPSQCPLCKNDITKRSLQESTRFSQLVEELLKIIHAFQLDTGLQFANSYNFAKKENHSPEHLKDEVSIIQSMGYRNRAKRLLQSEPENPSLQETSLSVPLSNLGIVRTLRTKQQIQPQKKSVYIELGSDSSEDTVNKATYCSVGDQELLQITPQGTRDETSLDSAKKAACEFSEKDITNTEHHQSSNNDLNTTEKHATERHPEKYQGSSVSNLHVEPCGTNTHASSLQHENSLLLTKDRMNVEKAEFCNKSKQPGLARSQHNRWTGSKETCNDRQTPSTEKKVDLNANALYERKEWNKQKLPCSENPRDAEDVPWITLNSSIQKVNEWFSRSDELLSSDDSHDGGSESNAKVADVLDVLNEVDEYSGSSEKIDLLASDPHEPLICKSERVHSSSVESNIKDKIFGKTYRRKANLPNLSHVTENLIIGALVTESQIMQERPLTNKLKRKRRTTSGLHPEDFIKKADLAVQKTPEIINQGTNQMEQNGQVMNITNSAHENKTKGDSIQNEKNPNAIESLEEESAFKTKAEPISSSINNMELELNIHNSKAPKKNRLRRKSSTRHIHALELVVSRNLSPPNCTELQIDSCSSSEEIKKKNYNQMPVRHSRNLQLMEDKESATGAKKSNKPNEQTSKRHASDTFPELKLTKVPGSFTNCSNTSELKEFVNPSLSREEKEEKLETVKVSNNAKDPKDLMLSGERVLQTERSVESSSISLVPDTDYGTQESISLLEVSTLGKAKTERNKCMSQCAAFENPKELIHGCSEDTRNDTEGFKYPLGSEVNHSQETSIEIEESELDTQYLQNTFKVSKRQSFALFSNPGNPEEECATFSAHSRSLKKQSPKVTSECEQKEENQGKKESNIKPVQTVNITAGFSVVCQKDKPVDNAKCSIKGGSRFCLSSQFRGNETGLITPNKHGLLQNPYHIPPLFPVKSFVKTKCNKNLLEENSEEHSVSPERAVGNENIIPSTVSTISHNNIRENAFKEASSSNINEVGSSTNEVGSSINEVGPSDENIQAELGRNRGPKLNAVLRLGLLQPEVCKQSLPISNCKHPEIKKQEHEELVQTVNTDFSPCLISDNLEQPMGSSHASEVCSETPDDLLDDGEIKEDTSFAANDIKESSAVFSKSIQRGELSRSPSPFTHTHLAQGYQKEAKKLESSEENLSSEDEELPCFQHLLFGKVSNIPSQTTRHSTVATECLSKNTEENLLSLKNSLTDCSNQVILAKASQEHHLSEETKCSGSLFSSQCSELEDLTANTNTQDPFLIGSSKRMRHQSESQGVGLSDKELVSDDEERGTGLEEDNQEEQSVDSNLGEAASGYESETSVSEDCSRLSSQSEILTTQQRDTMQDNLIKLQQEMAELEAVLEQHGSQPSNSYPSIITDSSALEDLRNPEQSTSEKAVLTSQKSSEYPINQNPEGLSADKFEVSADSSTSKNKEPGVERSSPSKCQSLEDRWYVHSSSGSLQNGNYPSQEELIKVVDVETQQLEKSGPHDLMEPSYLPRQDLDGTPYLESGISLFSDDPESDPSEDRAPESAHVGSIPSSTSALKVPQWQVAESAQSPAAAHNTNTAGYNAMEESVSRENPKLTASTERVNKRMSLVVSGLTPEEFMLVYKFARRYHIALTNLISEETTHVVMKTDAEFVCERTLKYFLGIAGGKWVVSYFWVTQSIKERKMLNEHDFEVRGDVVNGRNHQGPKRARESPDRKIFRGLEICCYGPFTNMPTDQLEWMVQLCGASVVKELSSFTLGTGFHPIVVVQPDAWTEDNGFHAIGQMCEAPVVTREWVLDSVALYQCQELDTYLIPQIPHSHY.

An N-acetylmethionine modification is found at methionine 1. Residues 24–65 (CPICLELIKEPVSTKCDHIFCRFCMLKLLNQKKGPSQCPLCK) form an RING-type zinc finger. A Glycyl lysine isopeptide (Lys-Gly) (interchain with G-Cter in SUMO2) cross-link involves residue lysine 109. Position 114 is a phosphoserine (serine 114). Basic and acidic residues-rich tracts occupy residues 231–240 (KDITNTEHHQ) and 248–260 (TTEKHATERHPEK). The disordered stretch occupies residues 231-266 (KDITNTEHHQSSNNDLNTTEKHATERHPEKYQGSSV). Lysine 300 participates in a covalent cross-link: Glycyl lysine isopeptide (Lys-Gly) (interchain with G-Cter in SUMO2). The segment at 305–336 (NKSKQPGLARSQHNRWTGSKETCNDRQTPSTE) is disordered. The span at 318–334 (NRWTGSKETCNDRQTPS) shows a compositional bias: polar residues. Lysine 338 is covalently cross-linked (Glycyl lysine isopeptide (Lys-Gly) (interchain with G-Cter in SUMO2)). A phosphoserine mark is found at serine 394, serine 397, serine 422, and serine 433. Glycyl lysine isopeptide (Lys-Gly) (interchain with G-Cter in SUMO2) cross-links involve residues lysine 442, lysine 458, and lysine 518. Serine 550 carries the phosphoserine modification. Residue lysine 582 forms a Glycyl lysine isopeptide (Lys-Gly) (interchain with G-Cter in SUMO2) linkage. Positions 653 to 699 (NYNQMPVRHSRNLQLMEDKESATGAKKSNKPNEQTSKRHASDTFPEL) are disordered. Phosphoserine occurs at positions 693, 707, and 724. Glycyl lysine isopeptide (Lys-Gly) (interchain with G-Cter in SUMO2) cross-links involve residues lysine 733 and lysine 738. 2 positions are modified to phosphoserine: serine 752 and serine 839. Residues 886–914 (AHSRSLKKQSPKVTSECEQKEENQGKKES) are disordered. Over residues 900–914 (SECEQKEENQGKKES) the composition is skewed to basic and acidic residues. Glycyl lysine isopeptide (Lys-Gly) (interchain with G-Cter in SUMO2) cross-links involve residues lysine 917 and lysine 986. Serine 987 bears the Phosphoserine; by CHEK2 mark. Serine 1008 carries the phosphoserine modification. Polar residues predominate over residues 1042 to 1059 (SNINEVGSSTNEVGSSIN). A disordered region spans residues 1042-1062 (SNINEVGSSTNEVGSSINEVG). Residue lysine 1079 forms a Glycyl lysine isopeptide (Lys-Gly) (interchain with G-Cter in SUMO2) linkage. A phosphoserine mark is found at serine 1143, serine 1189, serine 1191, serine 1211, serine 1217, serine 1218, serine 1280, serine 1328, serine 1336, serine 1342, and serine 1387. A disordered region spans residues 1323–1397 (RMRHQSESQG…QSEILTTQQR (75 aa)). The span at 1342–1360 (SDDEERGTGLEEDNQEEQS) shows a compositional bias: acidic residues. A compositionally biased stretch (polar residues) spans 1373–1397 (ESETSVSEDCSRLSSQSEILTTQQR). Threonine 1394 is subject to Phosphothreonine. The tract at residues 1397-1424 (RDTMQDNLIKLQQEMAELEAVLEQHGSQ) is interaction with PALB2. A phosphoserine mark is found at serine 1423, serine 1457, serine 1524, and serine 1542. The disordered stretch occupies residues 1442–1501 (LRNPEQSTSEKAVLTSQKSSEYPINQNPEGLSADKFEVSADSSTSKNKEPGVERSSPSKC). Polar residues predominate over residues 1445–1470 (PEQSTSEKAVLTSQKSSEYPINQNPE). The disordered stretch occupies residues 1540 to 1618 (EKSGPHDLME…ESAQSPAAAH (79 aa)). Polar residues predominate over residues 1607–1618 (VAESAQSPAAAH). BRCT domains follow at residues 1642 to 1736 (STER…DFEV) and 1756 to 1855 (PDRK…TYLI).

In terms of assembly, heterodimer with BARD1. Part of the BRCA1-associated genome surveillance complex (BASC), which contains BRCA1, MSH2, MSH6, MLH1, ATM, BLM, PMS2 and the MRE11-RAD50-NBN protein (MRN) complex. This association could be a dynamic process changing throughout the cell cycle and within subnuclear domains. Component of the BRCA1-A complex, at least composed of BRCA1, BARD1, UIMC1/RAP80, ABRAXAS1, BRCC3/BRCC36, BABAM2 and BABAM1/NBA1. Interacts (via the BRCT domains) with ABRAXAS1 (phosphorylated form); this is important for recruitment to sites of DNA damage. Can form a heterotetramer with two molecules of ABRAXAS1 (phosphorylated form). Component of the BRCA1-RBBP8 complex. Interacts (via the BRCT domains) with RBBP8 ('Ser-327' phosphorylated form); the interaction ubiquitinates RBBP8, regulates CHEK1 activation, and involves RBBP8 in BRCA1-dependent G2/M checkpoint control on DNA damage. Associates with RNA polymerase II holoenzyme. Interacts with SMC1A, NELFB, DCLRE1C, CLSPN. CHEK1, CHEK2, BAP1, BRCC3, UBXN1 and PCLAF. Interacts (via BRCT domains) with BRIP1 (phosphorylated form). Interacts with FANCD2 (ubiquitinated form). Interacts with H2AX (phosphorylated on 'Ser-140'). Interacts (via the BRCT domains) with ACACA (phosphorylated form); the interaction prevents dephosphorylation of ACACA. Part of a BRCA complex containing BRCA1, BRCA2 and PALB2. Interacts directly with PALB2; the interaction is essential for its function in HRR. Interacts directly with BRCA2; the interaction occurs only in the presence of PALB2 which serves as the bridging protein. Interacts (via the BRCT domains) with LMO4; the interaction represses the transcriptional activity of BRCA1. Interacts (via the BRCT domains) with CCAR2 (via N-terminus); the interaction represses the transcriptional activator activity of BRCA1. Interacts with EXD2. Interacts (via C-terminus) with DHX9; this interaction is direct and links BRCA1 to the RNA polymerase II holoenzyme. Interacts with DNA helicase ZGRF1; the interaction is increased following DNA damage induction. In terms of processing, phosphorylated in response to IR, UV, and various stimuli that cause checkpoint activation, probably by ATM or ATR. Phosphorylation at Ser-987 by CHEK2 regulates mitotic spindle assembly. Phosphorylation by AURKA regulates centrosomal microtubule nucleation. Autoubiquitinated, undergoes 'Lys-6'-linked polyubiquitination. 'Lys-6'-linked polyubiquitination does not promote degradation.

It localises to the nucleus. Its subcellular location is the chromosome. It is found in the cytoplasm. It carries out the reaction S-ubiquitinyl-[E2 ubiquitin-conjugating enzyme]-L-cysteine + [acceptor protein]-L-lysine = [E2 ubiquitin-conjugating enzyme]-L-cysteine + N(6)-ubiquitinyl-[acceptor protein]-L-lysine.. The protein operates within protein modification; protein ubiquitination. In terms of biological role, E3 ubiquitin-protein ligase that specifically mediates the formation of 'Lys-6'-linked polyubiquitin chains and plays a central role in DNA repair by facilitating cellular responses to DNA damage. It is unclear whether it also mediates the formation of other types of polyubiquitin chains. The BRCA1-BARD1 heterodimer coordinates a diverse range of cellular pathways such as DNA damage repair, ubiquitination and transcriptional regulation to maintain genomic stability. Regulates centrosomal microtubule nucleation. Required for appropriate cell cycle arrests after ionizing irradiation in both the S-phase and the G2 phase of the cell cycle. Required for FANCD2 targeting to sites of DNA damage. Inhibits lipid synthesis by binding to inactive phosphorylated ACACA and preventing its dephosphorylation. Contributes to homologous recombination repair (HRR) via its direct interaction with PALB2, fine-tunes recombinational repair partly through its modulatory role in the PALB2-dependent loading of BRCA2-RAD51 repair machinery at DNA breaks. Component of the BRCA1-RBBP8 complex which regulates CHEK1 activation and controls cell cycle G2/M checkpoints on DNA damage via BRCA1-mediated ubiquitination of RBBP8. Acts as a transcriptional activator. This is Breast cancer type 1 susceptibility protein homolog (BRCA1) from Macaca mulatta (Rhesus macaque).